The chain runs to 296 residues: Urease accessory protein UreD (296 aa).

Belongs to the UreD family. As to quaternary structure, ureD, UreF and UreG form a complex that acts as a GTP-hydrolysis-dependent molecular chaperone, activating the urease apoprotein by helping to assemble the nickel containing metallocenter of UreC. The UreE protein probably delivers the nickel.

The protein localises to the cytoplasm. Its function is as follows. Required for maturation of urease via the functional incorporation of the urease nickel metallocenter. The protein is Urease accessory protein UreD of Methylibium petroleiphilum (strain ATCC BAA-1232 / LMG 22953 / PM1).